Here is a 317-residue protein sequence, read N- to C-terminus: Type II restriction enzyme NaeI (317 aa).

Homodimer.

The enzyme catalyses Endonucleolytic cleavage of DNA to give specific double-stranded fragments with terminal 5'-phosphates.. An E and P subtype restriction enzyme that recognizes the double-stranded unmethylated sequence 5'-GCCGGC-3' and cleaves after C-3. The sequence is that of Type II restriction enzyme NaeI from Lentzea aerocolonigenes (Lechevalieria aerocolonigenes).